A 163-amino-acid polypeptide reads, in one-letter code: 3-hydroxyacyl-[acyl-carrier-protein] dehydratase FabZ (163 aa).

Histidine 64 is a catalytic residue.

It belongs to the thioester dehydratase family. FabZ subfamily.

The protein resides in the cytoplasm. The catalysed reaction is a (3R)-hydroxyacyl-[ACP] = a (2E)-enoyl-[ACP] + H2O. Involved in unsaturated fatty acids biosynthesis. Catalyzes the dehydration of short chain beta-hydroxyacyl-ACPs and long chain saturated and unsaturated beta-hydroxyacyl-ACPs. This chain is 3-hydroxyacyl-[acyl-carrier-protein] dehydratase FabZ, found in Caulobacter sp. (strain K31).